Reading from the N-terminus, the 125-residue chain is Small ribosomal subunit protein bS6 (125 aa).

The segment at 96–125 (ETGASSMMKTVEREEARKASQAEFAAANER) is disordered. The segment covering 105-115 (TVEREEARKAS) has biased composition (basic and acidic residues).

It belongs to the bacterial ribosomal protein bS6 family.

In terms of biological role, binds together with bS18 to 16S ribosomal RNA. This is Small ribosomal subunit protein bS6 from Paracidovorax citrulli (strain AAC00-1) (Acidovorax citrulli).